The sequence spans 434 residues: Trigger factor (434 aa).

The region spanning 160 to 245 (GDKAKINFVG…LNEVQAANLP (86 aa)) is the PPIase FKBP-type domain.

The protein belongs to the FKBP-type PPIase family. Tig subfamily.

It localises to the cytoplasm. It carries out the reaction [protein]-peptidylproline (omega=180) = [protein]-peptidylproline (omega=0). Involved in protein export. Acts as a chaperone by maintaining the newly synthesized protein in an open conformation. Functions as a peptidyl-prolyl cis-trans isomerase. The protein is Trigger factor of Shewanella halifaxensis (strain HAW-EB4).